Consider the following 309-residue polypeptide: Coenzyme PQQ synthesis protein B (309 aa).

This sequence belongs to the PqqB family.

The protein operates within cofactor biosynthesis; pyrroloquinoline quinone biosynthesis. In terms of biological role, may be involved in the transport of PQQ or its precursor to the periplasm. This is Coenzyme PQQ synthesis protein B from Bradyrhizobium diazoefficiens (strain JCM 10833 / BCRC 13528 / IAM 13628 / NBRC 14792 / USDA 110).